The sequence spans 894 residues: Disease resistance protein SUMM2 (894 aa).

Residues 31–71 (ELSKNVVAMKKDMEVLKKKRDDVKRRVDIEEFTRRRERLSQ) adopt a coiled-coil conformation. The NB-ARC domain occupies 140–443 (TLATPIARIE…CEGFIDENES (304 aa)). An ATP-binding site is contributed by 183 to 190 (GMGGVGKT). 7 LRR repeats span residues 517–538 (SVRR…PECL), 539–561 (ELTT…FFRC), 564–586 (MLVV…ISKL), 588–610 (SLRY…QELK), 611–633 (KLRY…SNIS), 634–656 (SLRK…EELQ), and 660–681 (HLEV…LNAP).

Belongs to the disease resistance NB-LRR family. In terms of assembly, interacts with PAT1.

With respect to regulation, negatively regulated by the MEKK1-MKK1-MKK2-MPK4 kinase cascade. Disease resistance protein that mediates defense responses against the bacterial pathogen Pseudomonas syringae pv tomato strain DC3000, and the virulent oomycete Hyaloperonospora arabidopsidis isolate Noco2. Becomes active when the MEKK1-MKK1-MKK2-MPK4 kinase cascade is disrupted by the microbial effector hopAI1. Does not seem to be required for the activation of MPK4 by flg22, or flg22-induced up-regulation of PAD3. Functions downstream of MEKK2/SUMM1 in immune responses, including cell death and defense responses. This Arabidopsis thaliana (Mouse-ear cress) protein is Disease resistance protein SUMM2.